The sequence spans 561 residues: Sesquiterpene synthase 1 (561 aa).

Residues D313, D317, D458, and E466 each contribute to the Mg(2+) site. Positions 313–317 (DDIYD) match the DDXXD motif motif.

The protein belongs to the terpene synthase family. Tpsa subfamily. It depends on Mn(2+) as a cofactor. The cofactor is Mg(2+).

It is found in the cytoplasm. It carries out the reaction (2E,6E)-farnesyl diphosphate = (1S,8aR)-delta-cadinene + diphosphate. It participates in secondary metabolite biosynthesis; terpenoid biosynthesis. Involved in the biosynthesis of delta-cadinene. The sequence is that of Sesquiterpene synthase 1 (STS1) from Thapsia garganica (Deadly carrot).